A 113-amino-acid chain; its full sequence is U11-theraphotoxin-Hhn1l (113 aa).

The first 21 residues, 1–21 (MNTGRVTFLVVFLVAVSLGPA), serve as a signal peptide directing secretion. Positions 22-74 (DKEENPMEMQEKTQQGKNYLNFGENLVVPKLEELKAKLVEKESKKSKNSRQKR) are excised as a propeptide. Cystine bridges form between C82-C95 and C89-C110.

Belongs to the neurotoxin 14 (magi-1) family. 01 (HNTX-16) subfamily. As to expression, expressed by the venom gland.

The protein localises to the secreted. Its function is as follows. Probable ion channel inhibitor. This chain is U11-theraphotoxin-Hhn1l, found in Cyriopagopus hainanus (Chinese bird spider).